The chain runs to 361 residues: 5-formaminoimidazole-4-carboxamide-1-(beta)-D-ribofuranosyl 5'-monophosphate synthetase (361 aa).

Residues H27 and S94 each coordinate 5-amino-1-(5-phospho-beta-D-ribosyl)imidazole-4-carboxamide. The 233-residue stretch at 116–348 (RAILRWEAER…MGQRIAKEIK (233 aa)) folds into the ATP-grasp domain. ATP is bound by residues 146 to 208 (PDDI…ANYC) and E230. N258 serves as a coordination point for 5-amino-1-(5-phospho-beta-D-ribosyl)imidazole-4-carboxamide. 2 residues coordinate Mg(2+): Q297 and E310.

Belongs to the phosphohexose mutase family. Mg(2+) is required as a cofactor. The cofactor is Mn(2+).

The enzyme catalyses 5-amino-1-(5-phospho-beta-D-ribosyl)imidazole-4-carboxamide + formate + ATP = 5-formamido-1-(5-phospho-D-ribosyl)imidazole-4-carboxamide + ADP + phosphate. It functions in the pathway purine metabolism; IMP biosynthesis via de novo pathway; 5-formamido-1-(5-phospho-D-ribosyl)imidazole-4-carboxamide from 5-amino-1-(5-phospho-D-ribosyl)imidazole-4-carboxamide (formate route): step 1/1. In terms of biological role, catalyzes the ATP- and formate-dependent formylation of 5-aminoimidazole-4-carboxamide-1-beta-d-ribofuranosyl 5'-monophosphate (AICAR) to 5-formaminoimidazole-4-carboxamide-1-beta-d-ribofuranosyl 5'-monophosphate (FAICAR) in the absence of folates. The sequence is that of 5-formaminoimidazole-4-carboxamide-1-(beta)-D-ribofuranosyl 5'-monophosphate synthetase from Methanococcus maripaludis (strain C5 / ATCC BAA-1333).